A 73-amino-acid polypeptide reads, in one-letter code: Defensin-like protein 6 (73 aa).

The N-terminal stretch at 1-26 (MENKFFAAFFLLLVLFSSQEIIGGEG) is a signal peptide. Cystine bridges form between Cys-29–Cys-73, Cys-40–Cys-60, Cys-46–Cys-67, and Cys-50–Cys-69.

It belongs to the DEFL family.

The protein localises to the secreted. Functionally, confers broad-spectrum resistance to pathogens. The chain is Defensin-like protein 6 (PDF2.5) from Arabidopsis thaliana (Mouse-ear cress).